The sequence spans 86 residues: Large ribosomal subunit protein eL20 (86 aa).

This sequence belongs to the eukaryotic ribosomal protein eL20 family. Part of the 50S ribosomal subunit. Binds 23S rRNA.

The protein is Large ribosomal subunit protein eL20 of Saccharolobus islandicus (strain Y.N.15.51 / Yellowstone #2) (Sulfolobus islandicus).